The following is a 240-amino-acid chain: tRNA (guanine-N(1)-)-methyltransferase (240 aa).

S-adenosyl-L-methionine contacts are provided by residues G110 and 130–135; that span reads VGDYVL.

This sequence belongs to the RNA methyltransferase TrmD family. Homodimer.

The protein resides in the cytoplasm. It catalyses the reaction guanosine(37) in tRNA + S-adenosyl-L-methionine = N(1)-methylguanosine(37) in tRNA + S-adenosyl-L-homocysteine + H(+). Its function is as follows. Specifically methylates guanosine-37 in various tRNAs. This Borrelia recurrentis (strain A1) protein is tRNA (guanine-N(1)-)-methyltransferase.